The following is a 112-amino-acid chain: Nitrogen regulatory protein P-II (112 aa).

Tyrosine 51 carries the post-translational modification O-UMP-tyrosine.

The protein belongs to the P(II) protein family. Homotrimer.

P-II indirectly controls the transcription of the glutamine synthetase gene (glnA). P-II prevents NR-II-catalyzed conversion of NR-I to NR-I-phosphate, the transcriptional activator of glnA. When P-II is uridylylated to P-II-UMP, these events are reversed. When the ratio of Gln to 2-ketoglutarate decreases, P-II is uridylylated to P-II-UMP, which causes the deadenylation of glutamine synthetase, so activating the enzyme. This chain is Nitrogen regulatory protein P-II (glnB), found in Rhodospirillum rubrum (strain ATCC 11170 / ATH 1.1.1 / DSM 467 / LMG 4362 / NCIMB 8255 / S1).